Reading from the N-terminus, the 262-residue chain is Alpha/beta-gliadin A-I (262 aa).

A signal peptide spans 1–20 (MKTFLILALLAIVATTATTA). Disordered regions lie at residues 51–73 (LGQQ…PSQQ), 87–120 (PYSQ…QQQQ), and 225–251 (YPLG…QQLP). Pro residues-rich tracts occupy residues 56 to 71 (PFPP…PFPS) and 93 to 104 (PFRPQQPYPQPQ). Over residues 105-120 (PQYSQPQQPISQQQQQ) the composition is skewed to low complexity. Polar residues predominate over residues 232 to 251 (FRPSQQNPQAQGSVQPQQLP).

The protein belongs to the gliadin/glutenin family. Post-translationally, substrate of transglutaminase.

Functionally, gliadin is the major seed storage protein in wheat. The chain is Alpha/beta-gliadin A-I from Triticum aestivum (Wheat).